The following is a 187-amino-acid chain: Putative manganese efflux pump MntP (187 aa).

6 consecutive transmembrane segments (helical) span residues 3 to 23, 41 to 61, 62 to 82, 106 to 128, 142 to 162, and 167 to 187; these read LSAT…ASIG, LIFG…GLLA, TQFV…FLGG, LLVT…LAFL, ATLI…PLLG, and ILGG…HFAG.

The protein belongs to the MntP (TC 9.B.29) family.

It is found in the cell inner membrane. Functionally, probably functions as a manganese efflux pump. The sequence is that of Putative manganese efflux pump MntP from Cronobacter sakazakii (strain ATCC BAA-894) (Enterobacter sakazakii).